The primary structure comprises 471 residues: UDP-N-acetylmuramoylalanine--D-glutamate ligase (471 aa).

120 to 126 is a binding site for ATP; that stretch reads GSNGKTT.

The protein belongs to the MurCDEF family.

The protein localises to the cytoplasm. It carries out the reaction UDP-N-acetyl-alpha-D-muramoyl-L-alanine + D-glutamate + ATP = UDP-N-acetyl-alpha-D-muramoyl-L-alanyl-D-glutamate + ADP + phosphate + H(+). It functions in the pathway cell wall biogenesis; peptidoglycan biosynthesis. In terms of biological role, cell wall formation. Catalyzes the addition of glutamate to the nucleotide precursor UDP-N-acetylmuramoyl-L-alanine (UMA). In Nitrosomonas europaea (strain ATCC 19718 / CIP 103999 / KCTC 2705 / NBRC 14298), this protein is UDP-N-acetylmuramoylalanine--D-glutamate ligase.